Reading from the N-terminus, the 307-residue chain is MAETTKTHVILLACGSFNPITKGHIQMFERARDYLHKTGKFIVIGGIISPVHDSYGKQGLVSSRHRLNMCQLAVQNSDWIRVDPWECYQDTWQTTCSVLEHHRDLMKRVTGCILSNVNTPSVTPVIGQSLNQSTQPVYQNSNLSNKPTAVRILGKVGEGLSRMCCVRPNLQRVTFVDENANLGTVMRYEEIELRILLLCGSDLLESFCIPGLWNESDMEVIVGDFGIVVVPRDSVEPEQIINHSSLLRKYKNNILTVKDDSNHPMAVVSSTKSRLALQHGDGHVVDYLAQPVIDYVLKSQLYINTSG.

Residues Ser16 and Phe17 each coordinate NAD(+). An ATP-binding site is contributed by His24. NAD(+)-binding residues include Trp92, Thr95, Gly200, Asp202, Leu212, Trp213, and Arg232. 271 to 274 lines the ATP pocket; it reads TKSR.

The protein belongs to the eukaryotic NMN adenylyltransferase family. As to quaternary structure, monomer. It depends on Mg(2+) as a cofactor.

It is found in the golgi apparatus membrane. The protein resides in the cytoplasmic vesicle membrane. The protein localises to the cytoplasm. Its subcellular location is the cell projection. It localises to the axon. The enzyme catalyses beta-nicotinamide D-ribonucleotide + ATP + H(+) = diphosphate + NAD(+). It carries out the reaction nicotinate beta-D-ribonucleotide + ATP + H(+) = deamido-NAD(+) + diphosphate. The protein operates within cofactor biosynthesis; NAD(+) biosynthesis; NAD(+) from nicotinamide D-ribonucleotide: step 1/1. It participates in cofactor biosynthesis; NAD(+) biosynthesis; deamido-NAD(+) from nicotinate D-ribonucleotide: step 1/1. Nicotinamide/nicotinate-nucleotide adenylyltransferase that acts as an axon maintenance factor. Axon survival factor required for the maintenance of healthy axons: acts by delaying Wallerian axon degeneration, an evolutionarily conserved process that drives the loss of damaged axons. Catalyzes the formation of NAD(+) from nicotinamide mononucleotide (NMN) and ATP. Can also use the deamidated form; nicotinic acid mononucleotide (NaMN) as substrate but with a lower efficiency. Also catalyzes the reverse reaction, i.e. the pyrophosphorolytic cleavage of NAD(+). For the pyrophosphorolytic activity prefers NAD(+), NADH and NaAD as substrates and degrades nicotinic acid adenine dinucleotide phosphate (NHD) less effectively. Also acts as an activator of ADP-ribosylation by supporting the catalytic activity of PARP16 and promoting mono-ADP-ribosylation of ribosomes by PARP16. May be involved in the maintenance of axonal integrity. The protein is Nicotinamide/nicotinic acid mononucleotide adenylyltransferase 2 (nmnat2) of Xenopus tropicalis (Western clawed frog).